Here is a 409-residue protein sequence, read N- to C-terminus: Astacin-like metalloendopeptidase (409 aa).

An N-terminal signal peptide occupies residues 1-19 (MDLKMLLIFIAFLLPSVLG). Residues 30–39 (TATTESTQVT) show a composition bias toward low complexity. The interval 30-54 (TATTESTQVTTEEDIYDSPSPAETD) is disordered. The Peptidase M12A domain maps to 87–285 (SAINCRNCYW…AKINRLYNCS (199 aa)). 5 cysteine pairs are disulfide-bonded: Cys91–Cys94, Cys134–Cys284, Cys155–Cys175, Cys287–Cys313, and Cys339–Cys362. Residue His183 participates in Zn(2+) binding. Glu184 is an active-site residue. His187 and His193 together coordinate Zn(2+). One can recognise a CUB domain in the interval 287-399 (CSTIIDAAFG…SGFQATFTSA (113 aa)).

Requires Zn(2+) as cofactor. In terms of tissue distribution, expressed in ovary and gonads.

The protein localises to the cytoplasm. It is found in the cell membrane. The protein resides in the cytoplasmic vesicle. It localises to the secretory vesicle. Its subcellular location is the cortical granule. In terms of biological role, probable oocyte-specific oolemmal receptor involved in sperm and egg adhesion and fertilization. May act as a protease. This chain is Astacin-like metalloendopeptidase (ASTL), found in Gallus gallus (Chicken).